The following is a 616-amino-acid chain: MPKYRSATTTHGRNMAGARALWRATGMTDADFGKPIIAVVNSFTQFVPGHVHLRDLGKLVAEQIEAAGGVAKEFNTIAVDDGIAMGHGGMLYSLPSRELIADSVEYMVNAHCADAMVCISNCDKITPGMLMASLRLNIPVIFVSGGPMEAGKTKLSDQIIKLDLVDAMIQGADPKVSDSQSDQVERSACPTCGSCSGMFTANSMNCLTEALGLSQPGNGSLLATHADRKQLFLNAGKRIVELTKRYYEQNDESALPRNIASKAAFENAMTLDIAMGGSTNTVLHLLAAAQEAEIDFTMSDIDKLSRKVPQLCKVAPSTQKYHMEDVHRAGGVIGILGELDRAGLLNRDVKNVLGLTLPQTLEQYDVMLTQDDAVKNMFRAGPAGIRTTQAFSQDCRWDSLDDDRANGCIRSLEHAYSKDGGLAVLYGNFAENGCIVKTAGVDDSILKFTGPAKVYESQDDAVEAILGGKVVAGDVVVIRYEGPKGGPGMQEMLYPTSFLKSMGLGKACALITDGRFSGGTSGLSIGHVSPEAASGGSIGLIEDGDLIAIDIPNRGIQLQVSDAELAARREAQEARGDKAWTPKNRERQVSFALCAYASLATSADKGAVRDKSKLGG.

Asp-81 serves as a coordination point for Mg(2+). Position 122 (Cys-122) interacts with [2Fe-2S] cluster. Positions 123 and 124 each coordinate Mg(2+). Lys-124 bears the N6-carboxylysine mark. Cys-195 is a [2Fe-2S] cluster binding site. Position 491 (Glu-491) interacts with Mg(2+). Ser-517 functions as the Proton acceptor in the catalytic mechanism.

The protein belongs to the IlvD/Edd family. Homodimer. Requires [2Fe-2S] cluster as cofactor. It depends on Mg(2+) as a cofactor.

The enzyme catalyses (2R)-2,3-dihydroxy-3-methylbutanoate = 3-methyl-2-oxobutanoate + H2O. It catalyses the reaction (2R,3R)-2,3-dihydroxy-3-methylpentanoate = (S)-3-methyl-2-oxopentanoate + H2O. Its pathway is amino-acid biosynthesis; L-isoleucine biosynthesis; L-isoleucine from 2-oxobutanoate: step 3/4. It functions in the pathway amino-acid biosynthesis; L-valine biosynthesis; L-valine from pyruvate: step 3/4. Its function is as follows. Functions in the biosynthesis of branched-chain amino acids. Catalyzes the dehydration of (2R,3R)-2,3-dihydroxy-3-methylpentanoate (2,3-dihydroxy-3-methylvalerate) into 2-oxo-3-methylpentanoate (2-oxo-3-methylvalerate) and of (2R)-2,3-dihydroxy-3-methylbutanoate (2,3-dihydroxyisovalerate) into 2-oxo-3-methylbutanoate (2-oxoisovalerate), the penultimate precursor to L-isoleucine and L-valine, respectively. This chain is Dihydroxy-acid dehydratase, found in Shigella flexneri.